The following is a 225-amino-acid chain: Rho GDP-dissociation inhibitor 3 (225 aa).

It belongs to the Rho GDI family.

The protein resides in the cytoplasm. Functionally, inhibits GDP/GTP exchange reaction of RhoB. Interacts specifically with the GDP- and GTP-bound forms of post-translationally processed Rhob and Rhog proteins, both of which show a growth-regulated expression in mammalian cells. Stimulates the release of the GDP-bound but not the GTP-bound RhoB protein. Also inhibits the GDP/GTP exchange of RhoB but shows less ability to inhibit the dissociation of prebound GTP. The sequence is that of Rho GDP-dissociation inhibitor 3 (ARHGDIG) from Bos taurus (Bovine).